The sequence spans 325 residues: GMP reductase (325 aa).

Cysteine 174 functions as the Thioimidate intermediate in the catalytic mechanism. 203–226 contributes to the NADP(+) binding site; the sequence is IIADGGIRTNGDIAKSIRFGANMV.

The protein belongs to the IMPDH/GMPR family. GuaC type 2 subfamily.

The catalysed reaction is IMP + NH4(+) + NADP(+) = GMP + NADPH + 2 H(+). In terms of biological role, catalyzes the irreversible NADPH-dependent deamination of GMP to IMP. It functions in the conversion of nucleobase, nucleoside and nucleotide derivatives of G to A nucleotides, and in maintaining the intracellular balance of A and G nucleotides. The chain is GMP reductase from Latilactobacillus sakei subsp. sakei (strain 23K) (Lactobacillus sakei subsp. sakei).